The chain runs to 270 residues: Tryptophan synthase alpha chain (270 aa).

Residues Glu51 and Asp62 each act as proton acceptor in the active site.

Belongs to the TrpA family. As to quaternary structure, tetramer of two alpha and two beta chains.

It carries out the reaction (1S,2R)-1-C-(indol-3-yl)glycerol 3-phosphate + L-serine = D-glyceraldehyde 3-phosphate + L-tryptophan + H2O. It functions in the pathway amino-acid biosynthesis; L-tryptophan biosynthesis; L-tryptophan from chorismate: step 5/5. Its function is as follows. The alpha subunit is responsible for the aldol cleavage of indoleglycerol phosphate to indole and glyceraldehyde 3-phosphate. The sequence is that of Tryptophan synthase alpha chain from Methanothermobacter thermautotrophicus (strain ATCC 29096 / DSM 1053 / JCM 10044 / NBRC 100330 / Delta H) (Methanobacterium thermoautotrophicum).